A 55-amino-acid polypeptide reads, in one-letter code: Large ribosomal subunit protein bL32 (55 aa).

The segment covering 1 to 19 has biased composition (basic residues); the sequence is MAVPKFKKSRANTRARRSQ. The disordered stretch occupies residues 1-22; it reads MAVPKFKKSRANTRARRSQWKA.

It belongs to the bacterial ribosomal protein bL32 family.

The polypeptide is Large ribosomal subunit protein bL32 (Corynebacterium urealyticum (strain ATCC 43042 / DSM 7109)).